The sequence spans 380 residues: MESPIQIFRGEPGPTCAPSACLLPNSSSWFPNWAESDSNGSVGSEDQQLEPAHISPAIPVIITAVYSVVFVVGLVGNSLVMFVIIRYTKMKTATNIYIFNLALADALVTTTMPFQSAVYLMNSWPFGDVLCKIVISIDYYNMFTSIFTLTMMSVDRYIAVCHPVKALDFRTPLKAKIINICIWLLASSVGISAIVLGGTKVREDVDVIECSLQFPDDEYSWWDLFMKICVFVFAFVIPVLIIIVCYTLMILRLKSVRLLSGSREKDRNLRRITKLVLVVVAVFIICWTPIHIFILVEALGSTSHSTAVLSSYYFCIALGYTNSSLNPVLYAFLDENFKRCFRDFCFPIKMRMERQSTNRVRNTVQDPASMRDVGGMNKPV.

Residues 1–57 are Extracellular-facing; the sequence is MESPIQIFRGEPGPTCAPSACLLPNSSSWFPNWAESDSNGSVGSEDQQLEPAHISPA. Residues asparagine 25 and asparagine 39 are each glycosylated (N-linked (GlcNAc...) asparagine). The helical transmembrane segment at 58–85 threads the bilayer; the sequence is IPVIITAVYSVVFVVGLVGNSLVMFVII. Over 86 to 95 the chain is Cytoplasmic; the sequence is RYTKMKTATN. Residues 96-119 traverse the membrane as a helical segment; that stretch reads IYIFNLALADALVTTTMPFQSAVY. Topologically, residues 120–132 are extracellular; that stretch reads LMNSWPFGDVLCK. Cysteine 131 and cysteine 210 are disulfide-bonded. Residues 133–154 form a helical membrane-spanning segment; the sequence is IVISIDYYNMFTSIFTLTMMSV. Over 155–173 the chain is Cytoplasmic; the sequence is DRYIAVCHPVKALDFRTPL. A helical membrane pass occupies residues 174–196; the sequence is KAKIINICIWLLASSVGISAIVL. Topologically, residues 197 to 222 are extracellular; the sequence is GGTKVREDVDVIECSLQFPDDEYSWW. A helical membrane pass occupies residues 223–247; sequence DLFMKICVFVFAFVIPVLIIIVCYT. Residues 248–274 lie on the Cytoplasmic side of the membrane; that stretch reads LMILRLKSVRLLSGSREKDRNLRRITK. A helical transmembrane segment spans residues 275–296; sequence LVLVVVAVFIICWTPIHIFILV. Residues 297–311 lie on the Extracellular side of the membrane; it reads EALGSTSHSTAVLSS. A helical membrane pass occupies residues 312 to 333; that stretch reads YYFCIALGYTNSSLNPVLYAFL. Residues 334-380 are Cytoplasmic-facing; that stretch reads DENFKRCFRDFCFPIKMRMERQSTNRVRNTVQDPASMRDVGGMNKPV. Cysteine 345 is lipidated: S-palmitoyl cysteine.

It belongs to the G-protein coupled receptor 1 family. In terms of assembly, interacts with NHERF1. Interacts with GABARAPL1.

It is found in the cell membrane. Functionally, G-protein coupled opioid receptor that functions as a receptor for endogenous alpha-neoendorphins and dynorphins, but has low affinity for beta-endorphins. Also functions as a receptor for various synthetic opioids and for the psychoactive diterpene salvinorin A. Ligand binding causes a conformation change that triggers signaling via guanine nucleotide-binding proteins (G proteins) and modulates the activity of down-stream effectors, such as adenylate cyclase. Signaling leads to the inhibition of adenylate cyclase activity. Inhibits neurotransmitter release by reducing calcium ion currents and increasing potassium ion conductance. Plays a role in the perception of pain. Plays a role in mediating reduced physical activity upon treatment with synthetic opioids. Plays a role in the regulation of salivation in response to synthetic opioids. May play a role in arousal and regulation of autonomic and neuroendocrine functions. The protein is Kappa-type opioid receptor (Oprk1) of Rattus norvegicus (Rat).